We begin with the raw amino-acid sequence, 563 residues long: Envelope glycoprotein (563 aa).

The N-terminal stretch at 1–18 is a signal peptide; the sequence is MGFTTKIIFLYNLVLVYA. The Extracellular segment spans residues 19 to 503; that stretch reads GFDDPRKAIE…SNPLWTGLQG (485 aa). Asn113, Asn219, and Asn229 each carry an N-linked (GlcNAc...) asparagine; by host glycan. The short motif at 236–239 is the CXXC element; it reads CWLC. 3 disulfides stabilise this stretch: Cys236–Cys239, Cys236–Cys465, and Cys457–Cys464. Asn264, Asn282, Asn292, Asn306, Asn312, Asn321, and Asn339 each carry an N-linked (GlcNAc...) asparagine; by host glycan. The fusion peptide stretch occupies residues 380 to 400; the sequence is FIPLLAGLGITAAFTTGATGL. Coiled-coil stretches lie at residues 401 to 451 and 461 to 497; these read GVSV…LLTA and QEKC…SNPL. Residues 440 to 456 form an immunosuppression region; it reads LQNRRGLDLLTAEQGGI. Positions 457–465 match the CX6CC motif; sequence CLALQEKCC. Asn469 carries N-linked (GlcNAc...) asparagine; by host glycosylation. Residues 504–524 traverse the membrane as a helical segment; it reads LLPYLLPFLGPLLTLLLLLTI. Over 525 to 563 the chain is Cytoplasmic; the sequence is GPCIFNRLTAFINDKLNIIHAMVLTQQYQVLRTDEEAQD. The S-palmitoyl cysteine; by host moiety is linked to residue Cys527. A YXXL motif; contains endocytosis signal motif is present at residues 552-555; it reads YQVL.

In terms of assembly, the mature envelope protein (Env) consists of a trimer of SU-TM heterodimers attached by a labile interchain disulfide bond. Specific enzymatic cleavages in vivo yield mature proteins. Envelope glycoproteins are synthesized as an inactive precursor that is N-glycosylated and processed likely by host cell furin or by a furin-like protease in the Golgi to yield the mature SU and TM proteins. The cleavage site between SU and TM requires the minimal sequence [KR]-X-[KR]-R. The R-peptide is released from the C-terminus of the cytoplasmic tail of the TM protein upon particle formation as a result of proteolytic cleavage by the viral protease. Cleavage of this peptide is required for TM to become fusogenic. In terms of processing, the CXXC motif is highly conserved across a broad range of retroviral envelope proteins. It is thought to participate in the formation of a labile disulfide bond possibly with the CX6CC motif present in the transmembrane protein. Isomerization of the intersubunit disulfide bond to an SU intrachain disulfide bond is thought to occur upon receptor recognition in order to allow membrane fusion. Post-translationally, the transmembrane protein is palmitoylated.

Its subcellular location is the virion membrane. It is found in the host cell membrane. The surface protein (SU) attaches the virus to the host cell by binding to its receptor. This interaction triggers the refolding of the transmembrane protein (TM) and is thought to activate its fusogenic potential by unmasking its fusion peptide. Fusion occurs at the host cell plasma membrane. In terms of biological role, the transmembrane protein (TM) acts as a class I viral fusion protein. Under the current model, the protein has at least 3 conformational states: pre-fusion native state, pre-hairpin intermediate state, and post-fusion hairpin state. During viral and target cell membrane fusion, the coiled coil regions (heptad repeats) assume a trimer-of-hairpins structure, positioning the fusion peptide in close proximity to the C-terminal region of the ectodomain. The formation of this structure appears to drive apposition and subsequent fusion of viral and target cell membranes. Membranes fusion leads to delivery of the nucleocapsid into the cytoplasm. The protein is Envelope glycoprotein (env) of Baboon endogenous virus (strain M7).